Here is a 241-residue protein sequence, read N- to C-terminus: Ion-translocating oxidoreductase complex subunit E (241 aa).

6 helical membrane passes run 22 to 42 (LLGLCPVLAITVNAINAIGLG), 69 to 89 (IPIYIIIISSVVSSIDLVIKA), 91 to 111 (AFNLYQSLGIFIPLIITNCIV), 124 to 144 (VLVSILDGLSIGLGSTLTMFL), 157 to 177 (LFFGIEHVLGESFRFLYIEVL), and 182 to 202 (VFLLFAFPSGAFMILGIVLAG).

Belongs to the NqrDE/RnfAE family. As to quaternary structure, the complex is composed of six subunits: RnfA, RnfB, RnfC, RnfD, RnfE and RnfG.

The protein resides in the cell inner membrane. Its function is as follows. Part of a membrane-bound complex that couples electron transfer with translocation of ions across the membrane. The protein is Ion-translocating oxidoreductase complex subunit E of Buchnera aphidicola subsp. Baizongia pistaciae (strain Bp).